The sequence spans 458 residues: Protein amnionless (458 aa).

Residues 1 to 19 form the signal peptide; it reads MGALGRVLLWLQLCAMTRA. The Extracellular segment spans residues 20–362; sequence AYKLWVPNTS…ELNQSSSGAG (343 aa). Asn-27 carries an N-linked (GlcNAc...) asparagine glycan. Intrachain disulfides connect Cys-43/Cys-96, Cys-137/Cys-213, Cys-205/Cys-211, Cys-223/Cys-249, Cys-234/Cys-250, and Cys-239/Cys-253. The segment at 67–87 is interaction with CUBN; that stretch reads SDMLLPLDGELVLASGAALSA. Residues 203 to 254 form the VWFC domain; it reads QACTDASGCVCGNAEMLPWICASLLQPLGGRCPQAACQDPLLPQGQCCDLCG. N-linked (GlcNAc...) asparagine glycosylation occurs at Asn-355. The helical transmembrane segment at 363–383 threads the bilayer; sequence LAGGVAALVLLALLGTVLLLL. The Cytoplasmic portion of the chain corresponds to 384–458; the sequence is HRSGRLRWRR…LFAGEAEAEA (75 aa).

In terms of assembly, interacts (via extracellular region) with CUBN/cubilin. This gives rise to a huge complex containing one AMN chain and three CUBN chains. Post-translationally, N-glycosylated. A soluble form arises by proteolytic removal of the membrane anchor. In terms of tissue distribution, expressed in polarized epithelial cells which are specialized in resorption or transport, specifically kidney proximal tubules and intestinal epithelium.

Its subcellular location is the apical cell membrane. The protein resides in the cell membrane. It localises to the endosome membrane. It is found in the membrane. The protein localises to the coated pit. In terms of biological role, membrane-bound component of the endocytic receptor formed by AMN and CUBN. Required for normal CUBN glycosylation and trafficking to the cell surface. The complex formed by AMN and CUBN is required for efficient absorption of vitamin B12. Required for normal CUBN-mediated protein transport in the kidney. The polypeptide is Protein amnionless (Amn) (Mus musculus (Mouse)).